The following is a 358-amino-acid chain: WAT1-related protein At3g28080 (358 aa).

10 consecutive transmembrane segments (helical) span residues 12-32 (AVFL…STLF), 42-62 (IYPF…PSLF), 81-101 (IGLL…GIEY), 105-125 (TLAS…AVIF), 137-157 (SVAK…VIFY), 187-207 (WLIG…SFIL), 219-239 (FTVS…IGLV), 245-265 (PSIW…TGII), 283-303 (LYLA…GTIF), and 308-328 (LYLG…VVMW). One can recognise an EamA domain in the interval 27 to 155 (GLSTLFKVAT…LSLIGAFVVI (129 aa)).

This sequence belongs to the drug/metabolite transporter (DMT) superfamily. Plant drug/metabolite exporter (P-DME) (TC 2.A.7.4) family.

It is found in the membrane. The sequence is that of WAT1-related protein At3g28080 from Arabidopsis thaliana (Mouse-ear cress).